Here is a 51-residue protein sequence, read N- to C-terminus: Large ribosomal subunit protein eL39 (51 aa).

The protein belongs to the eukaryotic ribosomal protein eL39 family.

The sequence is that of Large ribosomal subunit protein eL39 from Methanosarcina acetivorans (strain ATCC 35395 / DSM 2834 / JCM 12185 / C2A).